Here is a 408-residue protein sequence, read N- to C-terminus: Putative UPF0496 protein 2 (408 aa).

The next 2 helical transmembrane spans lie at 224-244 (RIAR…AIVA) and 252-272 (ALVG…GAAR). The segment at 385-408 (MARGLPPPSPATVTTTSEERLTSS) is disordered.

The protein belongs to the UPF0496 family.

It is found in the membrane. The polypeptide is Putative UPF0496 protein 2 (Oryza sativa subsp. indica (Rice)).